The chain runs to 206 residues: Guanylate kinase (206 aa).

Residues 7–185 form the Guanylate kinase-like domain; sequence GLLIVISGPS…AVEKIRAIII (179 aa). Position 14–21 (14–21) interacts with ATP; it reads GPSGAGKG.

This sequence belongs to the guanylate kinase family.

Its subcellular location is the cytoplasm. It catalyses the reaction GMP + ATP = GDP + ADP. Essential for recycling GMP and indirectly, cGMP. The polypeptide is Guanylate kinase (Caldanaerobacter subterraneus subsp. tengcongensis (strain DSM 15242 / JCM 11007 / NBRC 100824 / MB4) (Thermoanaerobacter tengcongensis)).